The chain runs to 233 residues: Phosphatidylserine decarboxylase proenzyme (233 aa).

The active-site Schiff-base intermediate with substrate; via pyruvic acid is the serine 201. A Pyruvic acid (Ser); by autocatalysis modification is found at serine 201.

Belongs to the phosphatidylserine decarboxylase family. PSD-A subfamily. As to quaternary structure, heterodimer of a large membrane-associated beta subunit and a small pyruvoyl-containing alpha subunit. The cofactor is pyruvate. Post-translationally, is synthesized initially as an inactive proenzyme. Formation of the active enzyme involves a self-maturation process in which the active site pyruvoyl group is generated from an internal serine residue via an autocatalytic post-translational modification. Two non-identical subunits are generated from the proenzyme in this reaction, and the pyruvate is formed at the N-terminus of the alpha chain, which is derived from the carboxyl end of the proenzyme. The post-translation cleavage follows an unusual pathway, termed non-hydrolytic serinolysis, in which the side chain hydroxyl group of the serine supplies its oxygen atom to form the C-terminus of the beta chain, while the remainder of the serine residue undergoes an oxidative deamination to produce ammonia and the pyruvoyl prosthetic group on the alpha chain.

It localises to the cell membrane. It carries out the reaction a 1,2-diacyl-sn-glycero-3-phospho-L-serine + H(+) = a 1,2-diacyl-sn-glycero-3-phosphoethanolamine + CO2. The protein operates within phospholipid metabolism; phosphatidylethanolamine biosynthesis; phosphatidylethanolamine from CDP-diacylglycerol: step 2/2. Catalyzes the formation of phosphatidylethanolamine (PtdEtn) from phosphatidylserine (PtdSer). The protein is Phosphatidylserine decarboxylase proenzyme of Mycolicibacterium vanbaalenii (strain DSM 7251 / JCM 13017 / BCRC 16820 / KCTC 9966 / NRRL B-24157 / PYR-1) (Mycobacterium vanbaalenii).